A 202-amino-acid polypeptide reads, in one-letter code: Orotate phosphoribosyltransferase (202 aa).

5-phospho-alpha-D-ribose 1-diphosphate is bound by residues lysine 93 and 113-121 (EDIITTGGS). Residues threonine 117 and arginine 145 each coordinate orotate.

Belongs to the purine/pyrimidine phosphoribosyltransferase family. PyrE subfamily. As to quaternary structure, homodimer. It depends on Mg(2+) as a cofactor.

It catalyses the reaction orotidine 5'-phosphate + diphosphate = orotate + 5-phospho-alpha-D-ribose 1-diphosphate. It functions in the pathway pyrimidine metabolism; UMP biosynthesis via de novo pathway; UMP from orotate: step 1/2. In terms of biological role, catalyzes the transfer of a ribosyl phosphate group from 5-phosphoribose 1-diphosphate to orotate, leading to the formation of orotidine monophosphate (OMP). The polypeptide is Orotate phosphoribosyltransferase (Campylobacter concisus (strain 13826)).